A 341-amino-acid polypeptide reads, in one-letter code: GDP-fucose transporter 1 (341 aa).

Transmembrane regions (helical) follow at residues 17–37 (LVIG…LAIT), 41–61 (YPGL…YLLG), 71–91 (FTWD…LAIF), 103–123 (DTFI…DTVF), 132–152 (LTFL…ATDS), 156–176 (LTAY…MVYI), 187–207 (IWGL…VFWF), 231–251 (AFSS…FGFA), 260–280 (AFTV…VLIW), and 283–303 (HATP…VGYQ). A disordered region spans residues 316-341 (SEKDSEKGEEDEELTQLVPGKLASVV).

The protein belongs to the nucleotide-sugar transporter family. GDP-Mannose:GMP antiporter (GMA) (TC 2.A.7.13) subfamily. Ubiquitous.

It localises to the golgi apparatus membrane. In terms of biological role, acts as the major nucleotide-sugar transporter for the import of GDP-Fucose into the Golgi lumen. Transports GDP-Fucose in a strict counter-exchange mode. Is required for proper plant growth and development. Also acts as a GDP-mannose transporter that may be involved in the import of GDP-mannose from the cytoplasm into the Golgi lumen. The chain is GDP-fucose transporter 1 from Arabidopsis thaliana (Mouse-ear cress).